We begin with the raw amino-acid sequence, 382 residues long: Acetylxylan esterase A (382 aa).

The signal sequence occupies residues 1 to 21 (MKSLSFSFLVTLFLYLTLSSA). The propeptide occupies 22–31 (RTLGKDVNKR). Positions 35–307 (GSLQQVTGFG…GAKDMEWFGF (273 aa)) are catalytic. An N-linked (GlcNAc...) asparagine glycan is attached at asparagine 46. Serine 152 serves as the catalytic Charge relay system. Asparagine 194 is a glycosylation site (N-linked (GlcNAc...) asparagine). The ser/Thr-rich linker stretch occupies residues 308-345 (SGSGSSSTTTASATKTSTTSTTSTKTTSSTSSTTTSST). Residues 313 to 345 (SSTTTASATKTSTTSTTSTKTTSSTSSTTTSST) show a composition bias toward low complexity. The disordered stretch occupies residues 313 to 346 (SSTTTASATKTSTTSTTSTKTTSSTSSTTTSSTG). One can recognise a CBM1 domain in the interval 346-382 (GVAAHWGQCGGSGWTGPTVCESGYTCTYSNAWYSQCL).

Belongs to the carbohydrate esterase 1 (CE1) family. AxeA subfamily. In terms of assembly, monomer. In terms of processing, glycosylated.

It is found in the secreted. It carries out the reaction Deacetylation of xylans and xylo-oligosaccharides.. The protein operates within glycan degradation; xylan degradation. Its activity is regulated as follows. Inactivated by phenylmethylsulfonylfluorid (PMSF), a specific inhibitor of serine esterases. Its function is as follows. Acetylxylan esterase involved in the hydrolysis of xylan, a major structural heterogeneous polysaccharide found in plant biomass representing the second most abundant polysaccharide in the biosphere, after cellulose. Degrades acetylated xylans by cleaving acetyl side groups from the hetero-xylan backbone. The sequence is that of Acetylxylan esterase A (axeA) from Talaromyces purpureogenus (Soft rot fungus).